The following is a 2193-amino-acid chain: Genome polyprotein (2193 aa).

The segment at Met1–Gly22 is disordered. Residue Gly2 is the site of N-myristoyl glycine; by host attachment. The Cytoplasmic portion of the chain corresponds to Gly2–Gln1503. 2 amphipathic alpha-helix regions span residues Gly566–Ala588 and Arg568–Ala588. Catalysis depends on for protease 2A activity residues His883 and Asp901. 2 residues coordinate Zn(2+): Cys918 and Cys920. Catalysis depends on Cys972, which acts as the For protease 2A activity. The Zn(2+) site is built by Cys978 and His980. The segment at Ser1112–Leu1184 is membrane-binding. The tract at residues Ser1112–Thr1250 is oligomerization. The segment at Ser1133–Ser1137 is RNA-binding. The SF3 helicase domain maps to Glu1216 to Ala1374. Gly1240 to Ser1247 serves as a coordination point for ATP. Zn(2+)-binding residues include Cys1381, Cys1392, Ser1393, and Cys1397. The C4-type; degenerate zinc finger occupies Cys1381 to Cys1397. Positions Glu1424–Ile1431 are RNA-binding. The interval Ile1435–Gln1440 is oligomerization. Residues Ser1504–Tyr1519 lie within the membrane without spanning it. Residues Lys1520–Phe2193 are Cytoplasmic-facing. Tyr1529 is subject to O-(5'-phospho-RNA)-tyrosine. Residues Gly1549–Phe1727 form the Peptidase C3 domain. Residues His1588, Glu1619, and Cys1695 each act as for protease 3C activity in the active site. Residues Gly1958–Leu2073 form the RdRp catalytic domain. Asp1964 and Asp2060 together coordinate Mg(2+).

This sequence belongs to the picornaviruses polyprotein family. As to quaternary structure, interacts with capsid protein VP1 and capsid protein VP3 to form heterotrimeric protomers. In terms of assembly, interacts with capsid protein VP0, and capsid protein VP3 to form heterotrimeric protomers. Five protomers subsequently associate to form pentamers which serve as building blocks for the capsid. Interacts with capsid protein VP2, capsid protein VP3 and capsid protein VP4 following cleavage of capsid protein VP0. Interacts with host SCARB2. Interacts with host ARF6; this interaction mediates viral endocytosis. Interacts with capsid protein VP1 and capsid protein VP3 in the mature capsid. Interacts with host SCARB2. As to quaternary structure, interacts with capsid protein VP0 and capsid protein VP1 to form heterotrimeric protomers. Five protomers subsequently associate to form pentamers which serve as building blocks for the capsid. Interacts with capsid protein VP4 in the mature capsid. Interacts with protein 2C; this interaction may be important for virion morphogenesis. In terms of assembly, interacts with capsid protein VP1 and capsid protein VP3. Homodimer. As to quaternary structure, interacts with host BAX; this interaction activates the mitochondrial apoptotic pathway. Interacts with host ILF2. In terms of assembly, homohexamer; forms a hexameric ring structure with 6-fold symmetry characteristic of AAA+ ATPases. Interacts (via N-terminus) with host RTN3 (via reticulon domain); this interaction is important for viral replication. Interacts with capsid protein VP3; this interaction may be important for virion morphogenesis. Interacts with protein 3CD. As to quaternary structure, homodimer. Interacts with host GBF1. Interacts (via GOLD domain) with host ACBD3 (via GOLD domain); this interaction allows the formation of a viral protein 3A/ACBD3 heterotetramer with a 2:2 stoichiometry, which will stimulate the recruitment of host PI4KB in order to synthesize PI4P at the viral RNA replication sites. In terms of assembly, interacts with RNA-directed RNA polymerase. Interacts with host IFIH1/MDA5; this interaction inhibits host IFIH1. Interacts with host RIGI. As to quaternary structure, interacts with protein 3AB and with RNA-directed RNA polymerase. In terms of assembly, interacts with Viral protein genome-linked and with protein 3CD. It depends on Mg(2+) as a cofactor. Post-translationally, specific enzymatic cleavages in vivo by the viral proteases yield processing intermediates and the mature proteins. Myristoylation is required for the formation of pentamers during virus assembly. Further assembly of 12 pentamers and a molecule of genomic RNA generates the provirion. In terms of processing, during virion maturation, immature virions are rendered infectious following cleavage of VP0 into VP4 and VP2. This maturation seems to be an autocatalytic event triggered by the presence of RNA in the capsid and it is followed by a conformational change infectious virion. Post-translationally, myristoylation is required during RNA encapsidation and formation of the mature virus particle. VPg is uridylylated by the polymerase into VPg-pUpU. This acts as a nucleotide-peptide primer for the genomic RNA replication.

Its subcellular location is the virion. It is found in the host cytoplasm. The protein localises to the host cytoplasmic vesicle membrane. It localises to the host nucleus. The enzyme catalyses a ribonucleoside 5'-triphosphate + H2O = a ribonucleoside 5'-diphosphate + phosphate + H(+). It carries out the reaction Selective cleavage of Tyr-|-Gly bond in the picornavirus polyprotein.. It catalyses the reaction RNA(n) + a ribonucleoside 5'-triphosphate = RNA(n+1) + diphosphate. The catalysed reaction is Selective cleavage of Gln-|-Gly bond in the poliovirus polyprotein. In other picornavirus reactions Glu may be substituted for Gln, and Ser or Thr for Gly.. Replication or transcription is subject to high level of random mutations by the nucleotide analog ribavirin. Forms an icosahedral capsid of pseudo T=3 symmetry with capsid proteins VP2 and VP3. The capsid is 300 Angstroms in diameter, composed of 60 copies of each capsid protein and enclosing the viral positive strand RNA genome. Capsid protein VP1 mainly forms the vertices of the capsid. Capsid protein VP1, together with VP2, interacts with host cell receptor SCARB2 to provide virion attachment to target host cells. This attachment induces virion internalization. This attachment induces virion internalization. After binding to its receptor, the capsid undergoes conformational changes. Capsid protein VP1 N-terminus (that contains an amphipathic alpha-helix) and capsid protein VP4 are externalized. Together, they shape a pore in the host membrane through which viral genome is translocated to host cell cytoplasm. In terms of biological role, forms an icosahedral capsid of pseudo T=3 symmetry with capsid proteins VP2 and VP3. The capsid is 300 Angstroms in diameter, composed of 60 copies of each capsid protein and enclosing the viral positive strand RNA genome. Capsid protein VP2, together with VP1, interacts with host cell receptor SCARB2 to provide virion attachment to target host cells. Functionally, forms an icosahedral capsid of pseudo T=3 symmetry with capsid proteins VP2 and VP3. The capsid is 300 Angstroms in diameter, composed of 60 copies of each capsid protein and enclosing the viral positive strand RNA genome. Its function is as follows. Lies on the inner surface of the capsid shell. After binding to the host receptor, the capsid undergoes conformational changes. Capsid protein VP4 is released, Capsid protein VP1 N-terminus is externalized, and together, they shape a pore in the host membrane through which the viral genome is translocated into the host cell cytoplasm. Component of immature procapsids, which is cleaved into capsid proteins VP4 and VP2 after maturation. Allows the capsid to remain inactive before the maturation step. In terms of biological role, cysteine protease that cleaves viral polyprotein and specific host proteins. It is responsible for the autocatalytic cleavage between the P1 and P2 regions, which is the first cleavage occurring in the polyprotein. Also cleaves the host translation initiation factor EIF4G1, in order to shut down the capped cellular mRNA translation. Inhibits the host nucleus-cytoplasm protein and RNA trafficking by cleaving host members of the nuclear pores. Counteracts stress granule formation probably by antagonizing its assembly or promoting its dissassembly. Cleaves and inhibits host IFIH1/MDA5, thereby inhibiting the type-I IFN production and the establishment of the antiviral state. Cleaves and inhibits host MAVS, thereby inhibiting the type-I IFN production and the establishment of the antiviral state. Functionally, plays an essential role in the virus replication cycle by acting as a viroporin. Creates a pore in the host endoplasmic reticulum and as a consequence releases Ca2+ in the cytoplasm of infected cell. In turn, high levels of cytoplasmic calcium may trigger membrane trafficking and transport of viral ER-associated proteins to viroplasms, sites of viral genome replication. Also activates the mitochondrial apoptotic pathway by activating host BAX. Its function is as follows. Induces and associates with structural rearrangements of intracellular membranes. Displays RNA-binding, nucleotide binding and NTPase activities. May play a role in virion morphogenesis and viral RNA encapsidation by interacting with the capsid protein VP3. Localizes the viral replication complex to the surface of membranous vesicles. Together with protein 3CD binds the Cis-Active RNA Element (CRE) which is involved in RNA synthesis initiation. Acts as a cofactor to stimulate the activity of 3D polymerase, maybe through a nucleid acid chaperone activity. In terms of biological role, localizes the viral replication complex to the surface of membranous vesicles. It inhibits host cell endoplasmic reticulum-to-Golgi apparatus transport and causes the disassembly of the Golgi complex, possibly through GBF1 interaction. This would result in depletion of MHC, trail receptors and IFN receptors at the host cell surface. Plays an essential role in viral RNA replication by recruiting ACBD3 and PI4KB at the viral replication sites, thereby allowing the formation of the rearranged membranous structures where viral replication takes place. Functionally, acts as a primer for viral RNA replication and remains covalently bound to viral genomic RNA. VPg is uridylylated prior to priming replication into VPg-pUpU. The oriI viral genomic sequence may act as a template for this. The VPg-pUpU is then used as primer on the genomic RNA poly(A) by the RNA-dependent RNA polymerase to replicate the viral genome. During genome replication, the VPg-RNA linkage is removed by the host TDP2, thereby accelerating replication. During the late stage of the replication cycle, host TDP2 is excluded from sites of viral RNA synthesis and encapsidation, allowing for the generation of progeny virions. Its function is as follows. Involved in the viral replication complex and viral polypeptide maturation. It exhibits protease activity with a specificity and catalytic efficiency that is different from protease 3C. Protein 3CD lacks polymerase activity. Protein 3CD binds to the 5'UTR of the viral genome. Major viral protease that mediates proteolytic processing of the polyprotein. Cleaves host EIF5B, contributing to host translation shutoff. Also cleaves host PABPC1, contributing to host translation shutoff. Disassembles host cytoplasmic stress granules by cleaving host G3BP1, although this effect is less prononced than the inhibition induced by protease 2A. Cleaves host RIGI and thus contributes to the inhibition of type I interferon production. Cleaves host IRF7 and thus contributes to the inhibition of type I interferon production. Cleaves host HNRNPA1 thereby increasing the translation of apoptosis protease activating factor APAF1, leading to apoptosis of the host cell. Cleaves host NLRP1, triggers host N-glycine-mediated degradation of the autoinhibitory NLRP1 N-terminal fragment. In terms of biological role, replicates the viral genomic RNA on the surface of intracellular membranes. May form linear arrays of subunits that propagate along a strong head-to-tail interaction called interface-I. Covalently attaches UMP to a tyrosine of VPg, which is used to prime RNA synthesis. The positive stranded RNA genome is first replicated at virus induced membranous vesicles, creating a dsRNA genomic replication form. This dsRNA is then used as template to synthesize positive stranded RNA genomes. ss(+)RNA genomes are either translated, replicated or encapsidated. The sequence is that of Genome polyprotein from Homo sapiens (Human).